The sequence spans 49 residues: Soritesidine (49 aa).

It is found in the secreted. Functionally, very potent toxin that exhibits a wide range of toxicities over various organisms and cells including brine shrimp larvae (Artemia salina), sea hare eggs (Aplysia kurodai), mice, and cultured mammalian cells. An SOR-containing fraction cleaves plasmid DNA in a bivalent metal ion dependent manner suggesting genotoxicity of SOR. In Spongosorites sp. (strain QM G324170) (Okinawan marine Sponge), this protein is Soritesidine.